Reading from the N-terminus, the 609-residue chain is UvrABC system protein C (609 aa).

Residues 19–97 form the GIY-YIG domain; that stretch reads ISPGCYLWKS…IKKHNPRFNV (79 aa). Positions 208–243 constitute a UVR domain; it reads ESLVGDLSIKMSASSNRMDFEKAARYRDMLQRIQNF.

The protein belongs to the UvrC family. Interacts with UvrB in an incision complex.

The protein resides in the cytoplasm. Its function is as follows. The UvrABC repair system catalyzes the recognition and processing of DNA lesions. UvrC both incises the 5' and 3' sides of the lesion. The N-terminal half is responsible for the 3' incision and the C-terminal half is responsible for the 5' incision. The polypeptide is UvrABC system protein C (Leptospira borgpetersenii serovar Hardjo-bovis (strain JB197)).